The chain runs to 398 residues: Tear acid lipase-like protein (398 aa).

A signal peptide spans 1–19; the sequence is MSWLLSTMCLVHVCGNIFC. The Nucleophile role is filled by Ser-170. A disulfide bridge connects residues Cys-243 and Cys-252. A glycan (N-linked (GlcNAc...) asparagine) is linked at Asn-268. Residues Asp-340 and His-369 each act as charge relay system in the active site.

Belongs to the AB hydrolase superfamily. Lipase family. In terms of assembly, monomer. N-glycosylated. Expressed in female lacrimal gland acinar cells from where it is secreted into tears (at protein level).

The protein localises to the secreted. In terms of biological role, female-specific protein which lacks detectable lipase activity against a range of substrates. Binds the hydrophobic lipid 1-aminoanthracene with high affinity. This is Tear acid lipase-like protein from Mesocricetus auratus (Golden hamster).